The primary structure comprises 97 residues: Large ribosomal subunit protein uL23 (97 aa).

This sequence belongs to the universal ribosomal protein uL23 family. In terms of assembly, part of the 50S ribosomal subunit. Contacts protein L29, and trigger factor when it is bound to the ribosome.

Its function is as follows. One of the early assembly proteins it binds 23S rRNA. One of the proteins that surrounds the polypeptide exit tunnel on the outside of the ribosome. Forms the main docking site for trigger factor binding to the ribosome. The chain is Large ribosomal subunit protein uL23 from Thermoanaerobacter pseudethanolicus (strain ATCC 33223 / 39E) (Clostridium thermohydrosulfuricum).